Consider the following 798-residue polypeptide: Nuclear cap-binding protein subunit 1 (798 aa).

Residues 28–241 form the MIF4G domain; it reads EKKLQGVIGK…SLSAQIEALR (214 aa). The interval 663 to 686 is disordered; it reads NKIKEEDDEESDIKMDEDETKEEK. Positions 668-682 are enriched in acidic residues; that stretch reads EDDEESDIKMDEDET.

The protein belongs to the NCBP1 family. Component of the nuclear cap-binding complex (CBC), a heterodimer composed of ncbp-1 and ncbp-1 that interacts with m7GpppG-capped RNA.

It localises to the nucleus. Component of the cap-binding complex (CBC), which binds cotranscriptionally to the 5'-cap of pre-mRNAs and is involved in various processes such as pre-mRNA splicing and RNA-mediated gene silencing (RNAi). The CBC complex is involved in miRNA-mediated RNA interference and is required for primary microRNAs (miRNAs) processing. In the CBC complex, ncbp-1 does not bind directly capped RNAs (m7GpppG-capped RNA) but is required to stabilize the movement of the N-terminal loop of ncbp-2 and lock the CBC into a high affinity cap-binding state with the cap structure. The polypeptide is Nuclear cap-binding protein subunit 1 (ncbp-1) (Caenorhabditis elegans).